The primary structure comprises 119 residues: Ribonuclease P protein component (119 aa).

The protein belongs to the RnpA family. As to quaternary structure, consists of a catalytic RNA component (M1 or rnpB) and a protein subunit.

It carries out the reaction Endonucleolytic cleavage of RNA, removing 5'-extranucleotides from tRNA precursor.. In terms of biological role, RNaseP catalyzes the removal of the 5'-leader sequence from pre-tRNA to produce the mature 5'-terminus. It can also cleave other RNA substrates such as 4.5S RNA. The protein component plays an auxiliary but essential role in vivo by binding to the 5'-leader sequence and broadening the substrate specificity of the ribozyme. The protein is Ribonuclease P protein component of Coprothermobacter proteolyticus (strain ATCC 35245 / DSM 5265 / OCM 4 / BT).